The sequence spans 553 residues: Flotillin family inner membrane protein YqiK (553 aa).

Topologically, residues 1-9 (MDDIVNSVP) are periplasmic. Residues 10–30 (SWMFTAIIAVCILFIIGIIFA) form a helical membrane-spanning segment. Over 31-553 (RLYRRASAEQ…STTPVEEKAE (523 aa)) the chain is Cytoplasmic.

This sequence belongs to the band 7/mec-2 family. Flotillin subfamily. As to quaternary structure, homooligomerizes.

The protein localises to the cell inner membrane. The protein resides in the membrane raft. Functionally, found in membrane microdomains that may be equivalent to eukaryotic membrane rafts. FMMs are highly dynamic and increase in number as cells age. Flotillins are thought to be important factors in membrane fluidity. The chain is Flotillin family inner membrane protein YqiK (yqiK) from Escherichia coli (strain K12).